Here is a 252-residue protein sequence, read N- to C-terminus: ATP-dependent L-serine kinase (252 aa).

Residue Glu35 is part of the active site. An O-phospho-L-serine-binding site is contributed by Val73. Asp74 contacts Mg(2+). Residues Gly75, His76, His77, Trp107, Lys231, Thr233, and His235 each coordinate O-phospho-L-serine.

This sequence belongs to the SerK family. In terms of assembly, monomer. Mg(2+) serves as cofactor.

It catalyses the reaction L-serine + ATP = O-phospho-L-serine + ADP + H(+). Free serine kinase that uses ATP to phosphorylate L-serine to yield O-phospho-L-serine and ADP. Can use ATP, UTP, CTP, GTP and the inorganic polyphosphates triphosphate and tetraphosphate as phosphate donors, with a preference for nucleoside 5'-triphosphates, but cannot use ADP. The catalytic efficiency is highest for ATP. Is specific for L-serine and cannot phosphorylate structurally similar compounds such as D-serine, L-threonine, L-homoserine, hydroxypyruvate, 3-hydroxypropionate and DL-glycerate. Likely contributes to serine metabolism, including cysteine biosynthesis. The chain is ATP-dependent L-serine kinase from Staphylothermus marinus (strain ATCC 43588 / DSM 3639 / JCM 9404 / F1).